The chain runs to 393 residues: Formate-dependent phosphoribosylglycinamide formyltransferase (393 aa).

N(1)-(5-phospho-beta-D-ribosyl)glycinamide contacts are provided by residues glutamate 22–leucine 23 and glutamate 82. ATP-binding positions include arginine 114, lysine 155, serine 160–glutamine 165, glutamate 195–valine 198, and glutamate 203. Residues arginine 119–leucine 308 enclose the ATP-grasp domain. Glutamate 267 and glutamate 279 together coordinate Mg(2+). N(1)-(5-phospho-beta-D-ribosyl)glycinamide is bound by residues aspartate 286, lysine 356, and arginine 363–arginine 364.

It belongs to the PurK/PurT family. In terms of assembly, homodimer.

It carries out the reaction N(1)-(5-phospho-beta-D-ribosyl)glycinamide + formate + ATP = N(2)-formyl-N(1)-(5-phospho-beta-D-ribosyl)glycinamide + ADP + phosphate + H(+). It participates in purine metabolism; IMP biosynthesis via de novo pathway; N(2)-formyl-N(1)-(5-phospho-D-ribosyl)glycinamide from N(1)-(5-phospho-D-ribosyl)glycinamide (formate route): step 1/1. In terms of biological role, involved in the de novo purine biosynthesis. Catalyzes the transfer of formate to 5-phospho-ribosyl-glycinamide (GAR), producing 5-phospho-ribosyl-N-formylglycinamide (FGAR). Formate is provided by PurU via hydrolysis of 10-formyl-tetrahydrofolate. The protein is Formate-dependent phosphoribosylglycinamide formyltransferase of Solidesulfovibrio magneticus (strain ATCC 700980 / DSM 13731 / RS-1) (Desulfovibrio magneticus).